Here is a 149-residue protein sequence, read N- to C-terminus: Phosphoribosyl-AMP cyclohydrolase (149 aa).

Position 92 (D92) interacts with Mg(2+). C93 serves as a coordination point for Zn(2+). Residues D94 and D96 each contribute to the Mg(2+) site. Residues C111 and C118 each coordinate Zn(2+).

The protein belongs to the PRA-CH family. In terms of assembly, homodimer. Mg(2+) serves as cofactor. Zn(2+) is required as a cofactor.

The protein localises to the cytoplasm. The enzyme catalyses 1-(5-phospho-beta-D-ribosyl)-5'-AMP + H2O = 1-(5-phospho-beta-D-ribosyl)-5-[(5-phospho-beta-D-ribosylamino)methylideneamino]imidazole-4-carboxamide. Its pathway is amino-acid biosynthesis; L-histidine biosynthesis; L-histidine from 5-phospho-alpha-D-ribose 1-diphosphate: step 3/9. In terms of biological role, catalyzes the hydrolysis of the adenine ring of phosphoribosyl-AMP. This chain is Phosphoribosyl-AMP cyclohydrolase, found in Rhizobium rhizogenes (strain K84 / ATCC BAA-868) (Agrobacterium radiobacter).